Reading from the N-terminus, the 419-residue chain is Lipoyl synthase, mitochondrial (419 aa).

A mitochondrion-targeting transit peptide spans 1 to 26 (MAVCAGRLKCFGNPAVSLRTAASRAY). Low complexity predominate over residues 28–47 (TTTSPDPAIPSSSSASSSSA). The tract at residues 28 to 61 (TTTSPDPAIPSSSSASSSSALPKRPQTSFRDKLN) is disordered. Residues C136, C141, C147, C167, C171, C174, and S382 each coordinate [4Fe-4S] cluster. The region spanning 150–371 (GSSKSAATAT…KDRALEMGFL (222 aa)) is the Radical SAM core domain. The tract at residues 399 to 419 (AESTGPESTNVPNVTPDAIVR) is disordered.

It belongs to the radical SAM superfamily. Lipoyl synthase family. Requires [4Fe-4S] cluster as cofactor.

The protein localises to the mitochondrion. It catalyses the reaction [[Fe-S] cluster scaffold protein carrying a second [4Fe-4S](2+) cluster] + N(6)-octanoyl-L-lysyl-[protein] + 2 oxidized [2Fe-2S]-[ferredoxin] + 2 S-adenosyl-L-methionine + 4 H(+) = [[Fe-S] cluster scaffold protein] + N(6)-[(R)-dihydrolipoyl]-L-lysyl-[protein] + 4 Fe(3+) + 2 hydrogen sulfide + 2 5'-deoxyadenosine + 2 L-methionine + 2 reduced [2Fe-2S]-[ferredoxin]. Its pathway is protein modification; protein lipoylation via endogenous pathway; protein N(6)-(lipoyl)lysine from octanoyl-[acyl-carrier-protein]: step 2/2. Catalyzes the radical-mediated insertion of two sulfur atoms into the C-6 and C-8 positions of the octanoyl moiety bound to the lipoyl domains of lipoate-dependent enzymes, thereby converting the octanoylated domains into lipoylated derivatives. The sequence is that of Lipoyl synthase, mitochondrial from Coccidioides posadasii (strain C735) (Valley fever fungus).